A 581-amino-acid chain; its full sequence is Phosphoinositide phospholipase C 2 (581 aa).

Residues 26–102 form the EF-hand-like domain; sequence EIKTIFEKYS…NPPLALHKVH (77 aa). The PI-PLC X-box domain occupies 103–248; it reads HDMDAPISHY…LKRRIIISTK (146 aa). Residues H118 and H164 contribute to the active site. The interval 279-314 is disordered; sequence PSFIQRNKSEAKDDLDGNDDDDDDDDEDKSKINAPP. Acidic residues predominate over residues 294–305; that stretch reads DGNDDDDDDDDE. Residues 317-433 form the PI-PLC Y-box domain; the sequence is KHLIAIHAGK…GYIKKPDLLL (117 aa). Residues 434-563 form the C2 domain; it reads KSGSDSDIFD…EGIRAFPLHS (130 aa).

Ca(2+) serves as cofactor. In terms of processing, phosphorylation level varies significantly during early response to bacterial elicitor. As to expression, expressed in roots, shoots, leaves and flowers.

The protein resides in the cell membrane. The catalysed reaction is a 1,2-diacyl-sn-glycero-3-phospho-(1D-myo-inositol-4,5-bisphosphate) + H2O = 1D-myo-inositol 1,4,5-trisphosphate + a 1,2-diacyl-sn-glycerol + H(+). Its function is as follows. The production of the second messenger molecules diacylglycerol (DAG) and inositol 1,4,5-trisphosphate (IP3) is mediated by activated phosphatidylinositol-specific phospholipase C enzymes. At physiological calcium concentration, the preferred substrate is phosphatidylinositol 4,5-bisphosphate versus phosphatidylinositol. This is Phosphoinositide phospholipase C 2 (PLC2) from Arabidopsis thaliana (Mouse-ear cress).